We begin with the raw amino-acid sequence, 315 residues long: Glutamyl-Q tRNA(Asp) synthetase (315 aa).

Residues 12–16 (RFAPS) and glutamate 48 contribute to the L-glutamate site. The 'HIGH' region motif lies at 15–25 (PSPSGPLHFGS). Residues cysteine 104, cysteine 106, tyrosine 124, and cysteine 128 each contribute to the Zn(2+) site. Residues tyrosine 181 and arginine 199 each contribute to the L-glutamate site. The 'KMSKS' region signature appears at 237 to 241 (KLSKQ). Lysine 240 provides a ligand contact to ATP.

Belongs to the class-I aminoacyl-tRNA synthetase family. GluQ subfamily. The cofactor is Zn(2+).

Catalyzes the tRNA-independent activation of glutamate in presence of ATP and the subsequent transfer of glutamate onto a tRNA(Asp). Glutamate is transferred on the 2-amino-5-(4,5-dihydroxy-2-cyclopenten-1-yl) moiety of the queuosine in the wobble position of the QUC anticodon. This chain is Glutamyl-Q tRNA(Asp) synthetase, found in Aromatoleum aromaticum (strain DSM 19018 / LMG 30748 / EbN1) (Azoarcus sp. (strain EbN1)).